The sequence spans 143 residues: Late embryogenesis abundant protein 1 (143 aa).

Positions 1-17 (MSSQQNQNRQGEQQEQG) are enriched in low complexity. Positions 1–143 (MSSQQNQNRQ…QAGEKVKGRD (143 aa)) are disordered. 4 repeat units span residues 47 to 57 (KTAEFRDSAGE), 69 to 79 (KGQEFKERAGE), 80 to 90 (KAEETKQRAGE), and 91 to 101 (KMDETKQRAGE). Basic and acidic residues-rich tracts occupy residues 47–60 (KTAE…ETIR) and 69–143 (KGQE…KGRD). Residues 47–101 (KTAEFRDSAGETIRDLTGQAQEKGQEFKERAGEKAEETKQRAGEKMDETKQRAGE) are 4 X 11 AA approximate repeats.

This sequence belongs to the LEA type 4 family.

In terms of biological role, may be involved in defense against water stress. This chain is Late embryogenesis abundant protein 1, found in Aphelenchoides avenae (Mycophagous nematode worm).